The chain runs to 464 residues: Chromosomal replication initiator protein DnaA (464 aa).

The tract at residues 1–82 (MKNAAELWHN…GSRLDIQFIE (82 aa)) is domain I, interacts with DnaA modulators. The tract at residues 82–125 (EEGQAKHMLDRQNEEVEVMEVAPAKTKAQKTPKSSDELVMSELG) is domain II. The segment at 126–342 (QLNEKYTFDT…GALTRVIAYA (217 aa)) is domain III, AAA+ region. Residues Gly-170, Gly-172, Lys-173, and Thr-174 each coordinate ATP. The interval 343–464 (NLVGRTIDPN…EQIKHELKHS (122 aa)) is domain IV, binds dsDNA.

Belongs to the DnaA family. In terms of assembly, oligomerizes as a right-handed, spiral filament on DNA at oriC.

The protein resides in the cytoplasm. In terms of biological role, plays an essential role in the initiation and regulation of chromosomal replication. ATP-DnaA binds to the origin of replication (oriC) to initiate formation of the DNA replication initiation complex once per cell cycle. Binds the DnaA box (a 9 base pair repeat at the origin) and separates the double-stranded (ds)DNA. Forms a right-handed helical filament on oriC DNA; dsDNA binds to the exterior of the filament while single-stranded (ss)DNA is stabiized in the filament's interior. The ATP-DnaA-oriC complex binds and stabilizes one strand of the AT-rich DNA unwinding element (DUE), permitting loading of DNA polymerase. After initiation quickly degrades to an ADP-DnaA complex that is not apt for DNA replication. Binds acidic phospholipids. The polypeptide is Chromosomal replication initiator protein DnaA (Exiguobacterium sibiricum (strain DSM 17290 / CCUG 55495 / CIP 109462 / JCM 13490 / 255-15)).